The following is a 553-amino-acid chain: Hydroxylamine reductase (553 aa).

The [2Fe-2S] cluster site is built by cysteine 3, cysteine 6, cysteine 18, and cysteine 25. Residues histidine 249, glutamate 273, cysteine 317, cysteine 405, cysteine 433, cysteine 459, glutamate 493, and lysine 495 each coordinate hybrid [4Fe-2O-2S] cluster. Cysteine persulfide is present on cysteine 405.

It belongs to the HCP family. The cofactor is [2Fe-2S] cluster. Requires hybrid [4Fe-2O-2S] cluster as cofactor.

It localises to the cytoplasm. The enzyme catalyses A + NH4(+) + H2O = hydroxylamine + AH2 + H(+). In terms of biological role, catalyzes the reduction of hydroxylamine to form NH(3) and H(2)O. This Actinobacillus succinogenes (strain ATCC 55618 / DSM 22257 / CCUG 43843 / 130Z) protein is Hydroxylamine reductase.